Here is a 299-residue protein sequence, read N- to C-terminus: Peroxisomal biogenesis factor 19 (299 aa).

The residue at position 2 (A2) is an N-acetylalanine. The docking to the peroxisome membrane and binding to PEX3 stretch occupies residues 2–56 (AAAEGGCGAGVEADRELEELLESALDDFDKAKPSPAPSPTISAPDASGPQKRSPG). The segment at 2–91 (AAAEGGCGAG…QATAEFEKAM (90 aa)) is necessary for PEX19 function on peroxisome biogenesis. The tract at residues 25–63 (ALDDFDKAKPSPAPSPTISAPDASGPQKRSPGDTAKDAL) is disordered. Residues S35, S39, S54, and S66 each carry the phosphoserine modification. At T236 the chain carries Phosphothreonine. C296 bears the Cysteine methyl ester mark. The S-farnesyl cysteine moiety is linked to residue C296. Residues 297 to 299 (LIM) constitute a propeptide, removed in mature form.

It belongs to the peroxin-19 family. Interacts with a broad range of peroxisomal membrane proteins, including PEX3, PEX10, PEX11A, PEX11B, PEX12, PEX13, PEX14 and PEX16, PXMP2/PMP22, PXMP4/PMP24, SLC25A17/PMP34, ABCD1/ALDP, ABCD2/ALDRP, and ABCD3/PMP70. Also interacts with the tumor suppressor CDKN2A/p19ARF.

It localises to the cytoplasm. The protein resides in the peroxisome membrane. Necessary for early peroxisomal biogenesis. Acts both as a cytosolic chaperone and as an import receptor for peroxisomal membrane proteins (PMPs). Binds and stabilizes newly synthesized PMPs in the cytoplasm by interacting with their hydrophobic membrane-spanning domains, and targets them to the peroxisome membrane by binding to the integral membrane protein PEX3. Excludes CDKN2A from the nucleus and prevents its interaction with MDM2, which results in active degradation of TP53. The protein is Peroxisomal biogenesis factor 19 (Pex19) of Rattus norvegicus (Rat).